A 114-amino-acid chain; its full sequence is Notch-regulated ankyrin repeat-containing protein (114 aa).

ANK repeat units follow at residues 50–79 (EGQT…DIRL) and 83–112 (DGWS…YSSS).

Belongs to the NRARP family. In terms of assembly, forms a ternary complex with the intracellular domain (ICD) of notch1 and rbpj/suh.

Its function is as follows. Promotes loss of intracellular domain (ICD) of Notch1 in embryos. By down-regulating ICD levels, could function as a negative feedback regulator of Notch signaling that attenuates ICD-mediated transcription. Involved in angiogenesis. May be involved in somitogenesis. This is Notch-regulated ankyrin repeat-containing protein (nrarp) from Xenopus tropicalis (Western clawed frog).